A 314-amino-acid polypeptide reads, in one-letter code: Serine hydrolase-like protein 2 (314 aa).

In terms of domain architecture, AB hydrolase-1 spans 33–293 (PPVLCLHGWL…GNHCVHMSEP (261 aa)). Ser108 is an active-site residue.

The protein belongs to the AB hydrolase superfamily.

Its subcellular location is the cytoplasm. It localises to the perinuclear region. It is found in the peroxisome. Probable serine hydrolase. May be related to cell muscle hypertrophy. In Homo sapiens (Human), this protein is Serine hydrolase-like protein 2 (SERHL2).